Consider the following 490-residue polypeptide: ATP synthase subunit alpha 1 (490 aa).

Belongs to the ATPase alpha/beta chains family. F-type ATPases have 2 components, CF(1) - the catalytic core - and CF(0) - the membrane proton channel. CF(1) has five subunits: alpha(3), beta(3), gamma(1), delta(1), epsilon(1). CF(0) has three main subunits: a(1), b(2) and c(9-12). The alpha and beta chains form an alternating ring which encloses part of the gamma chain. CF(1) is attached to CF(0) by a central stalk formed by the gamma and epsilon chains, while a peripheral stalk is formed by the delta and b chains.

It localises to the cell inner membrane. The catalysed reaction is ATP + H2O + 4 H(+)(in) = ADP + phosphate + 5 H(+)(out). In terms of biological role, produces ATP from ADP in the presence of a proton gradient across the membrane. The alpha chain is a regulatory subunit. This Legionella pneumophila (strain Paris) protein is ATP synthase subunit alpha 1.